A 276-amino-acid polypeptide reads, in one-letter code: Large ribosomal subunit protein uL2 (276 aa).

Disordered stretches follow at residues 30–57 (EKSLTEKLSKKGGRNNQGRLTVRHQGGG) and 219–276 (TVRG…RSKK).

It belongs to the universal ribosomal protein uL2 family. Part of the 50S ribosomal subunit. Forms a bridge to the 30S subunit in the 70S ribosome.

One of the primary rRNA binding proteins. Required for association of the 30S and 50S subunits to form the 70S ribosome, for tRNA binding and peptide bond formation. It has been suggested to have peptidyltransferase activity; this is somewhat controversial. Makes several contacts with the 16S rRNA in the 70S ribosome. This is Large ribosomal subunit protein uL2 from Exiguobacterium sibiricum (strain DSM 17290 / CCUG 55495 / CIP 109462 / JCM 13490 / 255-15).